Consider the following 107-residue polypeptide: Glutaredoxin 4 (107 aa).

The 103-residue stretch at Leu4–His106 folds into the Glutaredoxin domain. A glutathione-binding site is contributed by Lys21. Cys29 serves as a coordination point for [2Fe-2S] cluster. Residues Arg58, Phe70, and Cys83 to Asp84 each bind glutathione.

It belongs to the glutaredoxin family. Monothiol subfamily. Homodimer.

The protein localises to the cytoplasm. Its function is as follows. Monothiol glutaredoxin involved in the biogenesis of iron-sulfur clusters. This is Glutaredoxin 4 (grxD) from Haemophilus influenzae (strain 86-028NP).